The sequence spans 162 residues: Putative ankyrin repeat protein R664 (162 aa).

3 ANK repeats span residues 10–40 (KKLVEFLLYSNQDCSLIVIDALITIGANVNY), 47–78 (NDTPILSVITKTSESNPETVKLLLDKGADVNY), and 82–111 (YHETALMRTIKYGNFGIAKILLDYGANPYL).

The polypeptide is Putative ankyrin repeat protein R664 (Acanthamoeba polyphaga mimivirus (APMV)).